Consider the following 311-residue polypeptide: Methionyl-tRNA formyltransferase (311 aa).

112-115 (SLLP) contributes to the (6S)-5,6,7,8-tetrahydrofolate binding site.

Belongs to the Fmt family.

It catalyses the reaction L-methionyl-tRNA(fMet) + (6R)-10-formyltetrahydrofolate = N-formyl-L-methionyl-tRNA(fMet) + (6S)-5,6,7,8-tetrahydrofolate + H(+). Attaches a formyl group to the free amino group of methionyl-tRNA(fMet). The formyl group appears to play a dual role in the initiator identity of N-formylmethionyl-tRNA by promoting its recognition by IF2 and preventing the misappropriation of this tRNA by the elongation apparatus. This is Methionyl-tRNA formyltransferase from Rhizobium etli (strain ATCC 51251 / DSM 11541 / JCM 21823 / NBRC 15573 / CFN 42).